Reading from the N-terminus, the 433-residue chain is G2/mitotic-specific cyclin-B1 (433 aa).

The segment at Ile-19–Asp-47 is disordered. Position 73 is an N6-acetyllysine (Lys-73). Positions Pro-93–Ser-116 are disordered. Ser-126 carries the phosphoserine; by CDK1 modification. Ser-128 bears the Phosphoserine mark. Ser-133 carries the phosphoserine; by PLK1 modification. At Ser-147 the chain carries Phosphoserine. Interaction with CDK2 regions lie at residues Glu-169–Tyr-177 and Tyr-258–Met-261. Thr-321 carries the phosphothreonine modification.

The protein belongs to the cyclin family. Cyclin AB subfamily. Interacts with the CDC2 protein kinase to form a serine/threonine kinase holoenzyme complex also known as maturation promoting factor (MPF). The cyclin subunit imparts substrate specificity to the complex. Binds HEI10. Interacts with catalytically active RALBP1 and CDC2 during mitosis to form an endocytotic complex during interphase. Interacts with CCNF; interaction is required for nuclear localization. Interacts with CDK5RAP3. Interacts with RFPL4A and UBE2A. Interacts with INCA1. Ubiquitinated by the SCF(NIPA) complex during interphase, leading to its destruction. Deubiquitinated by USP22 during G2/M phase. Post-translationally, phosphorylated by PLK1 at Ser-133 on centrosomes during prophase: phosphorylation by PLK1 does not cause nuclear import. Phosphorylation at Ser-147 was also reported to be mediated by PLK1 but Ser-133 seems to be the primary phosphorylation site.

Its subcellular location is the cytoplasm. It localises to the nucleus. The protein localises to the cytoskeleton. It is found in the microtubule organizing center. The protein resides in the centrosome. In terms of biological role, essential for the control of the cell cycle at the G2/M (mitosis) transition. The chain is G2/mitotic-specific cyclin-B1 (CCNB1) from Homo sapiens (Human).